The sequence spans 699 residues: Cell pattern formation-associated protein StuA (699 aa).

Disordered stretches follow at residues M1–P20 and T31–H97. Over residues P32 to S49 the composition is skewed to low complexity. The segment covering N52 to P61 has biased composition (polar residues). The segment covering E75–E84 has biased composition (acidic residues). Positions R226–P332 constitute an HTH APSES-type domain. Residues G260–E281 constitute a DNA-binding region (H-T-H motif). Disordered stretches follow at residues A372–M594, R599–N618, and P674–G699. A compositionally biased stretch (polar residues) spans G376 to G423. Composition is skewed to basic and acidic residues over residues R428–R438 and G478–R491. The span at N520–D529 shows a compositional bias: polar residues. Positions R535–R545 are enriched in basic and acidic residues. Residues T566–M594 show a composition bias toward polar residues. Residues T669 to Q695 form a nuclear localization domain region.

Belongs to the EFG1/PHD1/stuA family.

The protein localises to the nucleus. In terms of biological role, transcription factor that regulates asexual reproduction. Binds the StuA-response elements (StRE) with the consensus sequence 5'-(A/T)CGCG(T/A)N(A/C)-3' at the promoters of target genes. Controls the expression of the gene clusters involved in the production of deoxynivalenol (DON) and 15-acetyldeoxynivalenol (15ADON). Regulates the expression of genes involved in chitin and glucan metabolism. Also controls catalase activity and cell surface hydrophobicity. Plays an important role in pathogenicity. The polypeptide is Cell pattern formation-associated protein StuA (Gibberella zeae (strain ATCC MYA-4620 / CBS 123657 / FGSC 9075 / NRRL 31084 / PH-1) (Wheat head blight fungus)).